The chain runs to 230 residues: MSPLSNFARTALACAVAALLGGCVIAGDVRPYPTMAPIQPIMPPQAQPTAGAIYAAGPTLQLYSDRRARDVGDLLTISLLENTTAQTSANTATNKESNLSLGTPSIFGAPVTLGGKDILSASAKGARDFTGKGNSAQSNRLQGNVTVTVIQRLPNGNLVVQGQKNLRLNQGDELVQVQGIVRPGDISQDNTIPSSRVAEARIVYGGRGPVAQSNAMGWLSRFFNSGLTPF.

The signal sequence occupies residues 1 to 22; it reads MSPLSNFARTALACAVAALLGG. Residue C23 is the site of N-palmitoyl cysteine attachment. C23 carries the S-diacylglycerol cysteine lipid modification.

Belongs to the FlgH family. In terms of assembly, the basal body constitutes a major portion of the flagellar organelle and consists of four rings (L,P,S, and M) mounted on a central rod.

The protein resides in the cell outer membrane. It localises to the bacterial flagellum basal body. In terms of biological role, assembles around the rod to form the L-ring and probably protects the motor/basal body from shearing forces during rotation. The protein is Flagellar L-ring protein of Stenotrophomonas maltophilia (strain R551-3).